The sequence spans 495 residues: Aspartyl/glutamyl-tRNA(Asn/Gln) amidotransferase subunit B (495 aa).

The protein belongs to the GatB/GatE family. GatB subfamily. Heterotrimer of A, B and C subunits.

It carries out the reaction L-glutamyl-tRNA(Gln) + L-glutamine + ATP + H2O = L-glutaminyl-tRNA(Gln) + L-glutamate + ADP + phosphate + H(+). It catalyses the reaction L-aspartyl-tRNA(Asn) + L-glutamine + ATP + H2O = L-asparaginyl-tRNA(Asn) + L-glutamate + ADP + phosphate + 2 H(+). Functionally, allows the formation of correctly charged Asn-tRNA(Asn) or Gln-tRNA(Gln) through the transamidation of misacylated Asp-tRNA(Asn) or Glu-tRNA(Gln) in organisms which lack either or both of asparaginyl-tRNA or glutaminyl-tRNA synthetases. The reaction takes place in the presence of glutamine and ATP through an activated phospho-Asp-tRNA(Asn) or phospho-Glu-tRNA(Gln). The protein is Aspartyl/glutamyl-tRNA(Asn/Gln) amidotransferase subunit B of Methanosarcina barkeri (strain Fusaro / DSM 804).